We begin with the raw amino-acid sequence, 157 residues long: Small ribosomal subunit protein uS7 (157 aa).

The protein belongs to the universal ribosomal protein uS7 family. Part of the 30S ribosomal subunit. Contacts proteins S9 and S11.

Its function is as follows. One of the primary rRNA binding proteins, it binds directly to 16S rRNA where it nucleates assembly of the head domain of the 30S subunit. Is located at the subunit interface close to the decoding center, probably blocks exit of the E-site tRNA. In Marinomonas sp. (strain MWYL1), this protein is Small ribosomal subunit protein uS7.